A 144-amino-acid chain; its full sequence is Small ribosomal subunit protein uS19 (144 aa).

It belongs to the universal ribosomal protein uS19 family.

In terms of biological role, protein S19 forms a complex with S13 that binds strongly to the 16S ribosomal RNA. The sequence is that of Small ribosomal subunit protein uS19 from Hyperthermus butylicus (strain DSM 5456 / JCM 9403 / PLM1-5).